A 374-amino-acid chain; its full sequence is N5-carboxyaminoimidazole ribonucleotide synthase (374 aa).

ATP is bound by residues Arg-108, Lys-148, 153-159 (GYDGKGQ), 183-186 (EKYL), Glu-191, His-214, and 266-267 (NE). An ATP-grasp domain is found at 112–296 (KETLKSAGTK…QFDTHILAVT (185 aa)).

Belongs to the PurK/PurT family. Homodimer.

The catalysed reaction is 5-amino-1-(5-phospho-beta-D-ribosyl)imidazole + hydrogencarbonate + ATP = 5-carboxyamino-1-(5-phospho-D-ribosyl)imidazole + ADP + phosphate + 2 H(+). It functions in the pathway purine metabolism; IMP biosynthesis via de novo pathway; 5-amino-1-(5-phospho-D-ribosyl)imidazole-4-carboxylate from 5-amino-1-(5-phospho-D-ribosyl)imidazole (N5-CAIR route): step 1/2. Functionally, catalyzes the ATP-dependent conversion of 5-aminoimidazole ribonucleotide (AIR) and HCO(3)(-) to N5-carboxyaminoimidazole ribonucleotide (N5-CAIR). This is N5-carboxyaminoimidazole ribonucleotide synthase from Staphylococcus aureus (strain MSSA476).